A 129-amino-acid polypeptide reads, in one-letter code: MARKTNTRKKRVKKNIEAGIAHIRSTFNNTIVTLTDTHGNALSWSSAGALGFRGSRKSTPFAAQMAAEAAAKVAMEHGLKTLEVTVKGPGAGREAAIRALQAAGLEVTAIRDVTPVPHNGCRPPKRRRV.

The protein belongs to the universal ribosomal protein uS11 family. As to quaternary structure, part of the 30S ribosomal subunit. Interacts with proteins S7 and S18. Binds to IF-3.

Functionally, located on the platform of the 30S subunit, it bridges several disparate RNA helices of the 16S rRNA. Forms part of the Shine-Dalgarno cleft in the 70S ribosome. This is Small ribosomal subunit protein uS11 from Bacillus cereus (strain G9842).